We begin with the raw amino-acid sequence, 85 residues long: Beta-insect depressant toxin BjIT2 (85 aa).

A signal peptide spans 1–21 (MKLLLLLVISASMLLECLVNA). Residues 22 to 82 (DGYIRKKDGC…TWKSSTNTCG (61 aa)) enclose the LCN-type CS-alpha/beta domain. 4 cysteine pairs are disulfide-bonded: C31-C81, C35-C56, C42-C63, and C46-C65. A propeptide spans 83-85 (RKK) (removed by a carboxypeptidase).

Belongs to the long (4 C-C) scorpion toxin superfamily. Sodium channel inhibitor family. Beta subfamily. Post-translationally, C-terminal basic residues are removed by a carboxypeptidase. As to expression, expressed by the venom gland.

Its subcellular location is the secreted. Its function is as follows. Depressant insect beta-toxins cause a transient contraction paralysis followed by a slow flaccid paralysis. They bind voltage-independently at site-4 of sodium channels (Nav) and shift the voltage of activation toward more negative potentials thereby affecting sodium channel activation and promoting spontaneous and repetitive firing. This toxin is active only on insects. This is Beta-insect depressant toxin BjIT2 from Hottentotta judaicus (Black scorpion).